The primary structure comprises 227 residues: 7-cyano-7-deazaguanine synthase (227 aa).

Position 8–18 (8–18 (FSGGQDSTTCL)) interacts with ATP. Zn(2+)-binding residues include Cys187, Cys196, Cys199, and Cys202.

The protein belongs to the QueC family. Zn(2+) is required as a cofactor.

The catalysed reaction is 7-carboxy-7-deazaguanine + NH4(+) + ATP = 7-cyano-7-deazaguanine + ADP + phosphate + H2O + H(+). The protein operates within purine metabolism; 7-cyano-7-deazaguanine biosynthesis. Catalyzes the ATP-dependent conversion of 7-carboxy-7-deazaguanine (CDG) to 7-cyano-7-deazaguanine (preQ(0)). The polypeptide is 7-cyano-7-deazaguanine synthase (Shewanella pealeana (strain ATCC 700345 / ANG-SQ1)).